A 279-amino-acid chain; its full sequence is NADPH-dependent 7-cyano-7-deazaguanine reductase (279 aa).

Ile86 to Ser88 contacts substrate. Ser88–Lys89 contacts NADPH. Cys187 functions as the Thioimide intermediate in the catalytic mechanism. The active-site Proton donor is Asp194. Residue His226–Glu227 coordinates substrate. Position 255–256 (Arg255–Gly256) interacts with NADPH.

Belongs to the GTP cyclohydrolase I family. QueF type 2 subfamily. In terms of assembly, homodimer.

The protein resides in the cytoplasm. The enzyme catalyses 7-aminomethyl-7-carbaguanine + 2 NADP(+) = 7-cyano-7-deazaguanine + 2 NADPH + 3 H(+). It participates in tRNA modification; tRNA-queuosine biosynthesis. Its function is as follows. Catalyzes the NADPH-dependent reduction of 7-cyano-7-deazaguanine (preQ0) to 7-aminomethyl-7-deazaguanine (preQ1). The chain is NADPH-dependent 7-cyano-7-deazaguanine reductase from Actinobacillus pleuropneumoniae serotype 5b (strain L20).